Consider the following 434-residue polypeptide: uncharacterized protein (434 aa).

One can recognise a TRAM domain in the interval 4-62 (LLTIHTQVEGEITALAFGGAGILRYHGFVIFVPFTAPGDQIICRIIEIKKSFAVAELVK). [4Fe-4S] cluster is bound by residues Cys75, Cys81, Cys84, and Cys161. S-adenosyl-L-methionine contacts are provided by Gln266, Tyr295, Glu316, and Asn364. Cys391 acts as the Nucleophile in catalysis.

It belongs to the class I-like SAM-binding methyltransferase superfamily. RNA M5U methyltransferase family.

This is an uncharacterized protein from Protochlamydia amoebophila (strain UWE25).